A 464-amino-acid chain; its full sequence is L-cysteine desulfhydrase-like protein lolT2 (464 aa).

Residue K227 is modified to N6-(pyridoxal phosphate)lysine.

Belongs to the class-V pyridoxal-phosphate-dependent aminotransferase family. It depends on pyridoxal 5'-phosphate as a cofactor.

The protein operates within alkaloid biosynthesis. Its function is as follows. L-cysteine desulfhydrase-like protein; part of the gene cluster that mediates the biosynthesis of loline alkaloids, potent insecticidal agents composed of a pyrrolizidine ring system and an uncommon ether bridge linking carbons 2 and 7. Lolines are structurally differentiated by the various modifications of the L-amino group and include norloline, loline, N-methylloline, N-acetylloline, N-acetylnorloline, and N-formylloline. The first committed step is the condensation of O-acetyl-L-homoserine (derived from L-aspartic acid) and L-proline, probably catalyzed by the gamma-type pyridoxal 5'-phosphate(PLP)-dependent enzyme lolC, to give the diamino diacid, NACPP. Ensuing cyclization, decarboxylation, and acetylation steps yield 1-exo-acetamidopyrrolizidine (AcAP). LolO is required for installation of the ether bridge upon the pathway intermediate, 1-exo-acetamidopyrrolizidine (AcAP). In sequential 2-oxoglutarate- and O(2)-consuming steps, lolO removes hydrogens from C2 and C7 of AcAP to form both carbon-oxygen bonds in N-acetylnorloline (NANL), the precursor to all other lolines. The enzymes lolD, lolE, lolF and lolT have also been proposed to be involved in the ether-bridge installation. Further processing of the exocyclic moiety of NANL by fungal N-acetamidase (LolN), methyltransferase (LolM), and cytochrome P450 (LolP) enzymes, with occasional involvement of a plant acetyltransferase, generates the other known lolines. LolN transforms NANL to norlonine which is monomethylated and dimethylated to respectively lonine and N-methyllonine (NML) by lolM. LolP catalyzes hydroxylation of the methyl group in N-methylloline (NML) and further oxygenation to N-formylloline (NFL). A plant acetyltransferase is responsible for the acetylation of loline to form N-acetylloline (NAL). LolA might interact with aspartate kinase to prevent feedback inhibition of its activity by these end products and thereby promote production of L-homoserine from L-aspartate. In Epichloe uncinata (Endophyte fungus), this protein is L-cysteine desulfhydrase-like protein lolT2.